Here is a 226-residue protein sequence, read N- to C-terminus: Lipoprotein-releasing system ATP-binding protein LolD 1 (226 aa).

The 221-residue stretch at 5-225 (LKLDGIRKSY…IVRVVDGKIA (221 aa)) folds into the ABC transporter domain. 42–49 (GPSGSGKS) provides a ligand contact to ATP.

Belongs to the ABC transporter superfamily. Lipoprotein translocase (TC 3.A.1.125) family. As to quaternary structure, the complex is composed of two ATP-binding proteins (LolD) and two transmembrane proteins (LolC and LolE).

The protein localises to the cell inner membrane. In terms of biological role, part of the ABC transporter complex LolCDE involved in the translocation of mature outer membrane-directed lipoproteins, from the inner membrane to the periplasmic chaperone, LolA. Responsible for the formation of the LolA-lipoprotein complex in an ATP-dependent manner. The protein is Lipoprotein-releasing system ATP-binding protein LolD 1 of Rhodopseudomonas palustris (strain ATCC BAA-98 / CGA009).